A 547-amino-acid chain; its full sequence is Solute carrier family 22 member 7 (547 aa).

The next 12 helical transmembrane spans lie at 21–41 (VALL…PIFL), 145–165 (ATST…GYLS), 173–193 (LLLV…ASVS), 203–223 (LTGT…LEWL), 233–253 (VLSS…GYLI), 258–278 (WLLL…WWVP), 345–365 (ISLC…GLSL), 374–396 (VYQT…YLSV), 403–423 (LTLA…LLVS), 431–451 (TALA…AYLF), 465–485 (MGLT…AALL), and 492–512 (LPKL…LLLP). Residues 521–547 (ETIQDVERKSAPSSLQEEEMPMKQVQD) form a disordered region.

It belongs to the major facilitator (TC 2.A.1) superfamily. Organic cation transporter (TC 2.A.1.19) family.

It localises to the basolateral cell membrane. Its subcellular location is the apical cell membrane. The protein resides in the cell membrane. The enzyme catalyses orotate(out) + L-glutamate(in) = orotate(in) + L-glutamate(out). It catalyses the reaction 3',5'-cyclic GMP(in) = 3',5'-cyclic GMP(out). It carries out the reaction GMP(in) = GMP(out). The catalysed reaction is 2'-deoxyguanosine(in) = 2'-deoxyguanosine(out). The enzyme catalyses GDP(in) = GDP(out). It catalyses the reaction guanosine(in) = guanosine(out). It carries out the reaction GTP(in) = GTP(out). The catalysed reaction is 3',5'-cyclic AMP(in) = 3',5'-cyclic AMP(out). The enzyme catalyses creatinine(in) = creatinine(out). It catalyses the reaction prostaglandin E2(out) = prostaglandin E2(in). It carries out the reaction 2-oxoglutarate(in) = 2-oxoglutarate(out). The catalysed reaction is glutarate(in) = glutarate(out). The enzyme catalyses urate(out) = urate(in). It catalyses the reaction estrone 3-sulfate(out) = estrone 3-sulfate(in). In terms of biological role, functions as a Na(+)-independent bidirectional multispecific transporter. Contributes to the renal and hepatic elimination of endogenous organic compounds from the systemic circulation into the urine and bile, respectively. Capable of transporting a wide range of purine and pyrimidine nucleobases, nucleosides and nucleotides, with cGMP, 2'deoxyguanosine and GMP being the preferred substrates. Functions as a pH- and chloride-independent cGMP bidirectional facilitative transporter that can regulate both intracellular and extracellular levels of cGMP and may be involved in cGMP signaling pathways. Mediates orotate/glutamate bidirectional exchange and most likely display a physiological role in hepatic release of glutamate into the blood. Involved in renal secretion and possible reabsorption of creatinine. Able to uptake prostaglandin E2 (PGE2) and may contribute to PGE2 renal excretion. Also transports alpha-ketoglutarate and urate. Apart from the orotate/glutamate exchange, the counterions for the uptake of other SLC22A7/OAT2 substrates remain to be identified. The polypeptide is Solute carrier family 22 member 7 (SLC22A7) (Sus scrofa (Pig)).